The following is a 469-amino-acid chain: Probable cobyric acid synthase (469 aa).

Residues 241–427 (SGSIGIVRYP…VHGILENNEF (187 aa)) enclose the GATase cobBQ-type domain. Catalysis depends on C319, which acts as the Nucleophile. H419 is an active-site residue.

The protein belongs to the CobB/CobQ family. CobQ subfamily.

It participates in cofactor biosynthesis; adenosylcobalamin biosynthesis. Its function is as follows. Catalyzes amidations at positions B, D, E, and G on adenosylcobyrinic A,C-diamide. NH(2) groups are provided by glutamine, and one molecule of ATP is hydrogenolyzed for each amidation. In Picrophilus torridus (strain ATCC 700027 / DSM 9790 / JCM 10055 / NBRC 100828 / KAW 2/3), this protein is Probable cobyric acid synthase.